The chain runs to 281 residues: NAD-dependent protein deacetylase 3 (281 aa).

Residues 1–281 (MLDSPTLDLL…PWLAEQLITR (281 aa)) form the Deacetylase sirtuin-type domain. NAD(+)-binding positions include 27-47 (GAGISTASGIPDYRDKDGVRR) and 105-108 (QNVD). The active-site Proton acceptor is the H123. Positions 131, 134, 182, and 185 each coordinate Zn(2+). NAD(+)-binding positions include 223-225 (GTS), 249-251 (NHG), and C267.

The protein belongs to the sirtuin family. Class II subfamily. Requires Zn(2+) as cofactor.

The protein localises to the cytoplasm. The catalysed reaction is N(6)-acetyl-L-lysyl-[protein] + NAD(+) + H2O = 2''-O-acetyl-ADP-D-ribose + nicotinamide + L-lysyl-[protein]. NAD-dependent protein deacetylase which modulates the activities of several enzymes which are inactive in their acetylated form. This Pseudomonas syringae pv. tomato (strain ATCC BAA-871 / DC3000) protein is NAD-dependent protein deacetylase 3.